A 321-amino-acid chain; its full sequence is Sporulation protein cse15 (321 aa).

Coiled-coil stretches lie at residues 37–70 and 108–205; these read FHQKNNKLLKENTDMKEKLQQLSAELTHMSTKEK and IEEK…KEKL. Composition is skewed to basic and acidic residues over residues 234–243 and 282–293; these read GTKQKEKTEE and AKSHTIEELKNR. 2 disordered regions span residues 234 to 253 and 274 to 293; these read GTKQKEKTEEEAPAAYAQPN and AHAQSSDQAKSHTIEELKNR.

This chain is Sporulation protein cse15 (cse15), found in Bacillus subtilis (strain 168).